The chain runs to 242 residues: Demethylmenaquinone methyltransferase (242 aa).

S-adenosyl-L-methionine is bound by residues Thr62, Asp83, and 112-113; that span reads DV.

The protein belongs to the class I-like SAM-binding methyltransferase superfamily. MenG/UbiE family.

It carries out the reaction a 2-demethylmenaquinol + S-adenosyl-L-methionine = a menaquinol + S-adenosyl-L-homocysteine + H(+). Its pathway is quinol/quinone metabolism; menaquinone biosynthesis; menaquinol from 1,4-dihydroxy-2-naphthoate: step 2/2. In terms of biological role, methyltransferase required for the conversion of demethylmenaquinol (DMKH2) to menaquinol (MKH2). This is Demethylmenaquinone methyltransferase from Protochlamydia amoebophila (strain UWE25).